The following is a 149-amino-acid chain: Transcriptional repressor NrdR (149 aa).

The segment at 3–34 (CPFCSAVDTKVIDSRLVAEGHQVRRRRECLLC) is a zinc-finger region. Positions 49–139 (PRVIKSNGSR…VYRSFEDIRE (91 aa)) constitute an ATP-cone domain.

The protein belongs to the NrdR family. The cofactor is Zn(2+).

Its function is as follows. Negatively regulates transcription of bacterial ribonucleotide reductase nrd genes and operons by binding to NrdR-boxes. This Aeromonas salmonicida (strain A449) protein is Transcriptional repressor NrdR.